The primary structure comprises 384 residues: Acetylgalactosaminyl-O-glycosyl-glycoprotein beta-1,3-N-acetylglucosaminyltransferase (384 aa).

At 1–12 (MAFPCRRSLTAK) the chain is on the cytoplasmic side. The chain crosses the membrane as a helical; Signal-anchor for type II membrane protein span at residues 13-31 (TLACLLVGVSFLALQQWFL). Topologically, residues 32 to 384 (QAPRSPREER…LSCDRGHRVS (353 aa)) are lumenal. The interval 34–68 (PRSPREERSPQEETPEGPTDAPAADEPPSELVPGP) is disordered. Asn73, Asn77, and Asn196 each carry an N-linked (GlcNAc...) asparagine glycan.

The protein belongs to the glycosyltransferase 31 family. In terms of tissue distribution, present in stomach and colon (at protein level). Restricted in the stomach, colon and small intestine, where core 3 structure is present.

The protein resides in the golgi apparatus membrane. It catalyses the reaction a 3-O-[N-acetyl-alpha-D-galactosaminyl]-L-threonyl-[protein] + UDP-N-acetyl-alpha-D-glucosamine = a 3-O-[N-acetyl-beta-D-glucosaminyl-(1-&gt;3)-N-acetyl-alpha-D-galactosaminyl]-L-threonyl-[protein] + UDP + H(+). The enzyme catalyses a 3-O-[N-acetyl-alpha-D-galactosaminyl]-L-seryl-[protein] + UDP-N-acetyl-alpha-D-glucosamine = 3-O-[N-acetyl-beta-D-glucosaminyl-(1-&gt;3)-N-acetyl-alpha-D-galactosaminyl]-L-seryl-[protein] + UDP + H(+). It functions in the pathway protein modification; protein glycosylation. Functionally, beta-1,3-N-acetylglucosaminyltransferase that synthesizes the core 3 structure of the O-glycan, an important precursor in the biosynthesis of mucin-type glycoproteins. Plays an important role in the synthesis of mucin-type O-glycans in digestive organs. The sequence is that of Acetylgalactosaminyl-O-glycosyl-glycoprotein beta-1,3-N-acetylglucosaminyltransferase (B3GNT6) from Homo sapiens (Human).